The primary structure comprises 457 residues: UDP-glycosyltransferase 708C1 (457 aa).

Glycine 31 serves as a coordination point for UDP-alpha-D-glucose. Residue histidine 32 is the Proton acceptor of the active site. Histidine 32 is a binding site for an anthocyanidin. Residue threonine 34 coordinates UDP-alpha-D-glucose. Residue asparagine 94 participates in an anthocyanidin binding. Aspartate 129 serves as the catalytic Charge relay. Threonine 150 contributes to the UDP-alpha-D-glucose binding site. The interval 279–280 (NR) is UDP. Positions 341, 343, 358, 361, 362, 363, and 366 each coordinate UDP-alpha-D-glucose. Glycine 381 is a binding site for an anthocyanidin. UDP-alpha-D-glucose contacts are provided by aspartate 382 and glutamine 383.

Belongs to the UDP-glycosyltransferase family. In terms of tissue distribution, expressed in cotyledons. Not detected in flowers, leaves, roots and hypocotyls.

The enzyme catalyses a 3'-hydro-2'-hydroxy-beta-oxodihydrochalcone + UDP-alpha-D-glucose = a 3'-(beta-D-glucopyranosyl)-2'-hydroxy-beta-oxodihydrochalcone + UDP + H(+). Functionally, UDP-glucose-dependent glucosyltransferase catalyzing the C-glucosylation of 2-hydroxyflavanones (2-hydroxynaringenin, 2-hydroxyeriodictyol and 2-hydroxypinocembrin) and phloretin. No activity with flavanones, flavones or flavonols. Exhibits C-glycosylation activity toward 2',4',6'-trihydroxyacetophenone and phloretin using UDP-glucose as sugar donor. Can use UDP-galactose as sugar donor, but catalytic efficiency is 14-fold lower toward UDP-galactose than toward UDP-glucose. The chain is UDP-glycosyltransferase 708C1 from Fagopyrum esculentum (Common buckwheat).